Reading from the N-terminus, the 77-residue chain is Omega-conotoxin-like 6 (77 aa).

An N-terminal signal peptide occupies residues 1–22 (MKLTCVVIIAVLLLTACQLITA). The propeptide occupies 23–50 (DDSRGVQKHRSLRSTTKVSKSTSCMEAG). 3 disulfides stabilise this stretch: cysteine 46-cysteine 61, cysteine 53-cysteine 64, and cysteine 60-cysteine 71.

It belongs to the conotoxin O1 superfamily. Expressed by the venom duct.

Its subcellular location is the secreted. In terms of biological role, omega-conotoxins act at presynaptic membranes, they bind and block voltage-gated calcium channels (Cav). The sequence is that of Omega-conotoxin-like 6 from Conus striatus (Striated cone).